The following is a 406-amino-acid chain: Olfactomedin-like protein 3 (406 aa).

The N-terminal stretch at 1-21 (MGPSAPLLLLFFLSWTGPLQG) is a signal peptide. Residues 25 to 101 (HLVEYMERRL…REVDYLETQN (77 aa)) adopt a coiled-coil conformation. Residues 134 to 401 (DCSYTVAQVR…QIVYKLEMKK (268 aa)) enclose the Olfactomedin-like domain. A disulfide bridge connects residues Cys135 and Cys328. 2 N-linked (GlcNAc...) asparagine glycosylation sites follow: Asn177 and Asn248.

The protein belongs to the OLFML3 family.

The protein localises to the secreted. Secreted scaffold protein that plays an essential role in dorsoventral patterning during early development. Stabilizes axial formation by restricting chordin (CHRD) activity on the dorsal side. Acts by facilitating the association between the tolloid proteases and their substrate chordin (CHRD), leading to enhance chordin (CHRD) degradation. May have matrix-related function involved in placental and embryonic development, or play a similar role in other physiological processes. In Mus musculus (Mouse), this protein is Olfactomedin-like protein 3 (Olfml3).